We begin with the raw amino-acid sequence, 78 residues long: Small ribosomal subunit protein bS18 (78 aa).

It belongs to the bacterial ribosomal protein bS18 family. Part of the 30S ribosomal subunit. Forms a tight heterodimer with protein bS6.

Functionally, binds as a heterodimer with protein bS6 to the central domain of the 16S rRNA, where it helps stabilize the platform of the 30S subunit. In Geobacillus kaustophilus (strain HTA426), this protein is Small ribosomal subunit protein bS18.